The primary structure comprises 391 residues: Aspartate aminotransferase (391 aa).

L-aspartate contacts are provided by G40 and N176. An N6-(pyridoxal phosphate)lysine modification is found at K236. R366 serves as a coordination point for L-aspartate.

The protein belongs to the class-I pyridoxal-phosphate-dependent aminotransferase family. As to quaternary structure, homodimer. Requires pyridoxal 5'-phosphate as cofactor.

It is found in the cytoplasm. The enzyme catalyses L-aspartate + 2-oxoglutarate = oxaloacetate + L-glutamate. This is Aspartate aminotransferase (aspC) from Pyrococcus horikoshii (strain ATCC 700860 / DSM 12428 / JCM 9974 / NBRC 100139 / OT-3).